The sequence spans 891 residues: DNA mismatch repair protein MutS (891 aa).

An ATP-binding site is contributed by 632-639; that stretch reads GPNMAGKS.

It belongs to the DNA mismatch repair MutS family.

In terms of biological role, this protein is involved in the repair of mismatches in DNA. It is possible that it carries out the mismatch recognition step. This protein has a weak ATPase activity. The protein is DNA mismatch repair protein MutS of Rhodopirellula baltica (strain DSM 10527 / NCIMB 13988 / SH1).